Reading from the N-terminus, the 399-residue chain is Acetate kinase (399 aa).

Residue Asn9 coordinates Mg(2+). Residue Lys16 coordinates ATP. Residue Arg90 coordinates substrate. Asp147 (proton donor/acceptor) is an active-site residue. Residues 207 to 211 (HIGNG), 282 to 284 (DLR), and 330 to 334 (GVGEN) each bind ATP. Glu384 lines the Mg(2+) pocket.

The protein belongs to the acetokinase family. In terms of assembly, homodimer. Requires Mg(2+) as cofactor. The cofactor is Mn(2+).

It localises to the cytoplasm. The enzyme catalyses acetate + ATP = acetyl phosphate + ADP. It functions in the pathway metabolic intermediate biosynthesis; acetyl-CoA biosynthesis; acetyl-CoA from acetate: step 1/2. In terms of biological role, catalyzes the formation of acetyl phosphate from acetate and ATP. Can also catalyze the reverse reaction. The polypeptide is Acetate kinase (Staphylococcus saprophyticus subsp. saprophyticus (strain ATCC 15305 / DSM 20229 / NCIMB 8711 / NCTC 7292 / S-41)).